We begin with the raw amino-acid sequence, 439 residues long: MAAARCWRPLLRGPRLSLHTAANAAATATETTCQDVAATPVARYPPIVASMTADSKAARLRRIERWQATVHAAESVDEKLRILTKMQFMKYMVYPQTFALNADRWYQYFTKTVFLSGLPPPPAEPEPEPEPEPEPALDLAALRAVACDCLLQEHFYLRRRRRVHRYEESEVISLPFLDQLVSTLVGLLSPHNPALAAAALDYRCPVHFYWVRGEEIIPRGHRRGRIDDLRYQIDDKPNNQIRISKQLAEFVPLDYSVPIEIPTIKCKPDKLPLFKRQYENHIFVGSKTADPCCYGHTQFHLLPDKLRRERLLRQNCADQIEVVFRANAIASLFAWTGAQAMYQGFWSEADVTRPFVSQAVITDGKYFSFFCYQLNTLALTTQADQNNPRKNICWGTQSKPLYETIEDNDVKGFNDDVLLQIVHFLLNRPKEEKSQLLEN.

Belongs to the mitochondrion-specific ribosomal protein mL65 family. Component of the mitochondrial large ribosomal subunit (mt-LSU). Mature mammalian 55S mitochondrial ribosomes consist of a small (28S) and a large (39S) subunit. The 28S small subunit contains a 12S ribosomal RNA (12S mt-rRNA) and 30 different proteins. The 39S large subunit contains a 16S rRNA (16S mt-rRNA), a copy of mitochondrial valine transfer RNA (mt-tRNA(Val)), which plays an integral structural role, and 52 different proteins. mL65 forms a heterodimer with mL37. As to expression, heart, skeletal muscle, kidney and liver. Lower expression in placenta and peripheral blood leukocytes.

It localises to the mitochondrion. In Homo sapiens (Human), this protein is Large ribosomal subunit protein mL65 (MRPS30).